Here is a 751-residue protein sequence, read N- to C-terminus: Ecdysteroid-phosphate phosphatase (751 aa).

Residues 16 to 60 (CISKQHLTPLQTLLQMGFPRHRAEKALASTGNRGVQIASDWLLAH) form the UBA domain. The SH3 domain maps to 271 to 336 (ATKQVQKVVY…PVNYTERTAE (66 aa)). Disordered stretches follow at residues 367–394 (GRSI…FEES) and 458–484 (EPPA…PGSL). Over residues 466-479 (RPDDTLSVHSDHSL) the composition is skewed to basic and acidic residues. The interval 490–751 (KNRKIYIMRH…RFEWNALSAT (262 aa)) is phosphatase-like. Residue Arg498 is part of the active site. His499 acts as the Tele-phosphohistidine intermediate in catalysis. His681 is a catalytic residue.

The protein resides in the cytoplasm. The protein localises to the cytosol. Its subcellular location is the nucleus. The catalysed reaction is ecdysone 22-phosphate + H2O = ecdysone + phosphate. It catalyses the reaction 20-hydroxyecdysone 22-phosphate + H2O = 20-hydroxyecdysone + phosphate. The enzyme catalyses 2-deoxyecdysone 22-phosphate + H2O = 2-deoxyecdysone + phosphate. Steroid phosphatase that dephosphorylates ecdysteroids such as ecdysone 22-phosphate (E22P), 3-epi-ecdysone 22-phosphate (E22P) and 3-epi-ecdysone 2-phosphate (E2P). Likely catalyzes the conversion of inactive phosphorylated ecdysteroids into their active forms. Shows high activity towards ecdysone 22-phosphate (E22P), but is also significantly active against 3-epi-ecdysone 22-phosphate (E22P) and 3-epi-ecdysone 2-phosphate (E2P). Also displays acid phosphatase activity towards 4-nitrophenyl phosphate (pNNP) in vitro. Has no activity towards 3-epi-ecdysone 3-phosphate (E3P). This Drosophila melanogaster (Fruit fly) protein is Ecdysteroid-phosphate phosphatase.